The primary structure comprises 340 residues: Glutamine synthetase (340 aa).

Residues 3–82 enclose the GS beta-grasp domain; the sequence is IKAEYIWIDG…LCEVLHTDLT (80 aa). The GS catalytic domain occupies 88 to 340; it reads TRALLRPVAE…CTELARREQI (253 aa). 4 residues coordinate Mg(2+): Glu-109, Glu-111, Glu-171, and Glu-178. Residue Glu-276 participates in L-glutamate binding.

It belongs to the glutamine synthetase family. In terms of assembly, homooctamer and homotetramer. Mg(2+) is required as a cofactor.

It localises to the cytoplasm. The enzyme catalyses L-glutamate + NH4(+) + ATP = L-glutamine + ADP + phosphate + H(+). Functionally, catalyzes the ATP-dependent biosynthesis of glutamine from glutamate and ammonia. The polypeptide is Glutamine synthetase (Streptomyces hygroscopicus).